The primary structure comprises 308 residues: MIGKVAGTAAIAGISFLAGKYSNDDLPIFRNVQSATNVPMNQIQVSEPMTVKPASLNADAMGPSRSAEIMKHGYPGFTNVRTYEDFVLSYDYKTRTAHWVCEHLTPERLKHAEGVDRKLCEFKPDITFPQKFLSQNTDYKCSGFDRGHLAAAGNHRKSQLAVDQTFYLSNMSPQVGRGFNRDKWNDLEMHCRRVAKKMINSYIITGPLYLPKLEGDGKKYIKYQVIGDNNVAVPTHFFKVALFEVTPGKFELESYILPNAVIEDTVEISKFHVPLDAVERSAGLEIFARLDPKSIVKENGAKKGGLLW.

His148 (proton acceptor) is an active-site residue. Asn180 contributes to the Mg(2+) binding site.

It belongs to the DNA/RNA non-specific endonuclease family. In terms of assembly, homodimer; disulfide-linked. Interacts with crn-5, crn-4, crn-1 and cyn-13. Requires Mg(2+) as cofactor.

It is found in the mitochondrion. Functionally, endonuclease important for programmed cell death; it mediates apoptotic DNA fragmentation. In Caenorhabditis elegans, this protein is Endonuclease G, mitochondrial (cps-6).